The chain runs to 432 residues: 3-phosphoshikimate 1-carboxyvinyltransferase (432 aa).

3 residues coordinate 3-phosphoshikimate: Lys-23, Ser-24, and Arg-28. Phosphoenolpyruvate is bound at residue Lys-23. Phosphoenolpyruvate-binding residues include Gly-95 and Arg-123. Ser-167, Gln-169, Asp-317, and Lys-344 together coordinate 3-phosphoshikimate. Gln-169 lines the phosphoenolpyruvate pocket. Asp-317 functions as the Proton acceptor in the catalytic mechanism. 2 residues coordinate phosphoenolpyruvate: Arg-348 and Arg-390.

This sequence belongs to the EPSP synthase family. Monomer.

The protein localises to the cytoplasm. It carries out the reaction 3-phosphoshikimate + phosphoenolpyruvate = 5-O-(1-carboxyvinyl)-3-phosphoshikimate + phosphate. It functions in the pathway metabolic intermediate biosynthesis; chorismate biosynthesis; chorismate from D-erythrose 4-phosphate and phosphoenolpyruvate: step 6/7. Functionally, catalyzes the transfer of the enolpyruvyl moiety of phosphoenolpyruvate (PEP) to the 5-hydroxyl of shikimate-3-phosphate (S3P) to produce enolpyruvyl shikimate-3-phosphate and inorganic phosphate. The sequence is that of 3-phosphoshikimate 1-carboxyvinyltransferase from Staphylococcus aureus (strain Newman).